The sequence spans 215 residues: Cytochrome b6 (215 aa).

Residues 32–52 (LFYCLGGITLTCFLIQVATGF) form a helical membrane-spanning segment. Residue C35 participates in heme c binding. H86 and H100 together coordinate heme b. 3 helical membrane passes run 90–110 (ASMMVLMMVLHVFRVYLTGGF), 116–136 (STWVTGVIMASCTVSFGVTGY), and 186–206 (LHTFVLPLLTAVFMLGHFLMI). Residues H187 and H202 each contribute to the heme b site.

It belongs to the cytochrome b family. PetB subfamily. The 4 large subunits of the cytochrome b6-f complex are cytochrome b6, subunit IV (17 kDa polypeptide, PetD), cytochrome f and the Rieske protein, while the 4 small subunits are PetG, PetL, PetM and PetN. The complex functions as a dimer. It depends on heme b as a cofactor. Requires heme c as cofactor.

The protein resides in the plastid. The protein localises to the chloroplast thylakoid membrane. Functionally, component of the cytochrome b6-f complex, which mediates electron transfer between photosystem II (PSII) and photosystem I (PSI), cyclic electron flow around PSI, and state transitions. In Bigelowiella natans (Pedinomonas minutissima), this protein is Cytochrome b6.